A 64-amino-acid polypeptide reads, in one-letter code: UPF0370 protein YPA_2246 (64 aa).

The helical transmembrane segment at 3 to 23 (WLADYWWIILILLVGMILNGI) threads the bilayer. Residues 36-47 (DNKPELPPHRDN) are compositionally biased toward basic and acidic residues. The disordered stretch occupies residues 36-64 (DNKPELPPHRDNNAQWDDEDDWPDQNKKK).

This sequence belongs to the UPF0370 family.

The protein localises to the cell membrane. The protein is UPF0370 protein YPA_2246 of Yersinia pestis bv. Antiqua (strain Antiqua).